The following is a 311-amino-acid chain: Ribosomal RNA small subunit methyltransferase H (311 aa).

Residues 33 to 35 (GGH), D51, F78, D99, and Q106 each bind S-adenosyl-L-methionine. Positions 289-311 (EEIEKNRRAHSAKLRAAEKLSFA) are disordered.

This sequence belongs to the methyltransferase superfamily. RsmH family.

It is found in the cytoplasm. The catalysed reaction is cytidine(1402) in 16S rRNA + S-adenosyl-L-methionine = N(4)-methylcytidine(1402) in 16S rRNA + S-adenosyl-L-homocysteine + H(+). In terms of biological role, specifically methylates the N4 position of cytidine in position 1402 (C1402) of 16S rRNA. This Carboxydothermus hydrogenoformans (strain ATCC BAA-161 / DSM 6008 / Z-2901) protein is Ribosomal RNA small subunit methyltransferase H.